Here is a 22-residue protein sequence, read N- to C-terminus: Peptide PGLa-R1 (22 aa).

Leucine 22 carries the leucine amide modification.

Expressed by the skin glands.

It is found in the secreted. In terms of biological role, antimicrobial peptide. The polypeptide is Peptide PGLa-R1 (Xenopus ruwenzoriensis (Uganda clawed frog)).